A 417-amino-acid chain; its full sequence is Serine--tRNA ligase (417 aa).

226–228 contacts L-serine; it reads TSE. ATP contacts are provided by residues 257–259 and valine 273; that span reads RRE. An L-serine-binding site is contributed by glutamate 280. ATP is bound at residue 344–347; sequence ELTS. Threonine 379 is an L-serine binding site.

The protein belongs to the class-II aminoacyl-tRNA synthetase family. Type-1 seryl-tRNA synthetase subfamily. Homodimer. The tRNA molecule binds across the dimer.

It is found in the cytoplasm. The catalysed reaction is tRNA(Ser) + L-serine + ATP = L-seryl-tRNA(Ser) + AMP + diphosphate + H(+). It carries out the reaction tRNA(Sec) + L-serine + ATP = L-seryl-tRNA(Sec) + AMP + diphosphate + H(+). Its pathway is aminoacyl-tRNA biosynthesis; selenocysteinyl-tRNA(Sec) biosynthesis; L-seryl-tRNA(Sec) from L-serine and tRNA(Sec): step 1/1. Its function is as follows. Catalyzes the attachment of serine to tRNA(Ser). Is also able to aminoacylate tRNA(Sec) with serine, to form the misacylated tRNA L-seryl-tRNA(Sec), which will be further converted into selenocysteinyl-tRNA(Sec). This Mycobacterium sp. (strain KMS) protein is Serine--tRNA ligase.